Reading from the N-terminus, the 154-residue chain is S-ribosylhomocysteine lyase (154 aa).

Histidine 58, histidine 62, and cysteine 125 together coordinate Fe cation.

It belongs to the LuxS family. As to quaternary structure, homodimer. It depends on Fe cation as a cofactor.

It catalyses the reaction S-(5-deoxy-D-ribos-5-yl)-L-homocysteine = (S)-4,5-dihydroxypentane-2,3-dione + L-homocysteine. Functionally, involved in the synthesis of autoinducer 2 (AI-2) which is secreted by bacteria and is used to communicate both the cell density and the metabolic potential of the environment. The regulation of gene expression in response to changes in cell density is called quorum sensing. Catalyzes the transformation of S-ribosylhomocysteine (RHC) to homocysteine (HC) and 4,5-dihydroxy-2,3-pentadione (DPD). This is S-ribosylhomocysteine lyase from Dichelobacter nodosus (strain VCS1703A).